Reading from the N-terminus, the 884-residue chain is E3 ubiquitin-protein ligase BRE1-like 1 (884 aa).

The segment at 1–37 (MGSTGEPDRKRRLSSSVAPGGGAPVSPAKRLAVAPTS) is disordered. A coiled-coil region spans residues 49–86 (YKNQKLSEQLEAHKFEYRALENKFAGLKEKQRTHNETL). A disordered region spans residues 107-127 (KSGSPNSSPGSGHNNVQKDGT). Low complexity predominate over residues 108–121 (SGSPNSSPGSGHNN). Coiled-coil stretches lie at residues 216-541 (LNNV…ELKL), 580-663 (SKLE…LQQI), 696-762 (RNLQ…QSLD), and 789-827 (KKRIEDDLEVMSRKASSLRAKARESAVLEKLRHEVKEYR). The segment at 832–871 (CGICHDRQKEVVITKCYHLFCNQCIQKSLGNRQRRCPSCS) adopts an RING-type zinc-finger fold.

This sequence belongs to the BRE1 family.

It localises to the nucleus. It carries out the reaction S-ubiquitinyl-[E2 ubiquitin-conjugating enzyme]-L-cysteine + [acceptor protein]-L-lysine = [E2 ubiquitin-conjugating enzyme]-L-cysteine + N(6)-ubiquitinyl-[acceptor protein]-L-lysine.. It participates in protein modification; protein ubiquitination. Functionally, E3 ubiquitin-protein ligase that monoubiquitinates H2B to form H2BK143ub1. H2BK143ub1 gives a specific tag for epigenetic transcriptional activation and is also prerequisite for H3K4me and maybe H3K79me. It thereby plays a central role in histone code and gene regulation. Forms a ubiquitin ligase complex in cooperation with the E2 enzyme UBC2/RAD6. The protein is E3 ubiquitin-protein ligase BRE1-like 1 (BRE1A) of Oryza sativa subsp. indica (Rice).